Consider the following 900-residue polypeptide: Alanine--tRNA ligase (900 aa).

Zn(2+)-binding residues include H568, H572, C672, and H676.

It belongs to the class-II aminoacyl-tRNA synthetase family. Requires Zn(2+) as cofactor.

The protein resides in the cytoplasm. It carries out the reaction tRNA(Ala) + L-alanine + ATP = L-alanyl-tRNA(Ala) + AMP + diphosphate. Functionally, catalyzes the attachment of alanine to tRNA(Ala) in a two-step reaction: alanine is first activated by ATP to form Ala-AMP and then transferred to the acceptor end of tRNA(Ala). Also edits incorrectly charged Ser-tRNA(Ala) and Gly-tRNA(Ala) via its editing domain. The chain is Alanine--tRNA ligase from Mycoplasma genitalium (strain ATCC 33530 / DSM 19775 / NCTC 10195 / G37) (Mycoplasmoides genitalium).